A 354-amino-acid chain; its full sequence is Fructose-bisphosphate aldolase 2 (354 aa).

Serine 50 is a binding site for D-glyceraldehyde 3-phosphate. Aspartate 83 acts as the Proton donor in catalysis. The Zn(2+) site is built by histidine 84, aspartate 105, glutamate 142, and histidine 198. Dihydroxyacetone phosphate is bound at residue glycine 199. Residue histidine 232 coordinates Zn(2+). Dihydroxyacetone phosphate is bound by residues 233 to 235 (GSS) and 275 to 278 (NIDT).

Belongs to the class II fructose-bisphosphate aldolase family. Homodimer. It depends on Zn(2+) as a cofactor.

It carries out the reaction beta-D-fructose 1,6-bisphosphate = D-glyceraldehyde 3-phosphate + dihydroxyacetone phosphate. The protein operates within carbohydrate biosynthesis; Calvin cycle. Its pathway is carbohydrate degradation; glycolysis; D-glyceraldehyde 3-phosphate and glycerone phosphate from D-glucose: step 4/4. In terms of biological role, catalyzes the aldol condensation of dihydroxyacetone phosphate (DHAP or glycerone-phosphate) with glyceraldehyde 3-phosphate (G3P) to form fructose 1,6-bisphosphate (FBP) in gluconeogenesis and the reverse reaction in glycolysis. This is Fructose-bisphosphate aldolase 2 (cfxB) from Cereibacter sphaeroides (Rhodobacter sphaeroides).